A 269-amino-acid polypeptide reads, in one-letter code: Tryptophan synthase alpha chain (269 aa).

Active-site proton acceptor residues include E49 and D60.

Belongs to the TrpA family. As to quaternary structure, tetramer of two alpha and two beta chains.

The catalysed reaction is (1S,2R)-1-C-(indol-3-yl)glycerol 3-phosphate + L-serine = D-glyceraldehyde 3-phosphate + L-tryptophan + H2O. Its pathway is amino-acid biosynthesis; L-tryptophan biosynthesis; L-tryptophan from chorismate: step 5/5. In terms of biological role, the alpha subunit is responsible for the aldol cleavage of indoleglycerol phosphate to indole and glyceraldehyde 3-phosphate. The polypeptide is Tryptophan synthase alpha chain (Klebsiella aerogenes (Enterobacter aerogenes)).